Here is a 1838-residue protein sequence, read N- to C-terminus: Type III effector DspE (1838 aa).

Residues methionine 1–alanine 12 show a composition bias toward basic and acidic residues. Disordered stretches follow at residues methionine 1 to glutamine 72, lysine 86 to glutamine 163, methionine 182 to proline 264, leucine 281 to serine 300, aspartate 398 to leucine 418, and asparagine 1480 to arginine 1505. A compositionally biased stretch (low complexity) spans alanine 27–alanine 46. Positions serine 91–lysine 103 are enriched in polar residues. The span at leucine 110 to histidine 120 shows a compositional bias: basic and acidic residues. The span at glycine 407–leucine 418 shows a compositional bias: polar residues. Positions asparagine 1480–serine 1502 are enriched in low complexity.

Belongs to the AvrE family. Interacts with the chaperone DspF (DspB/F).

Its subcellular location is the secreted. It is found in the host cell. With respect to regulation, polyamidoamine dendrimers inhibit channel and virulence activities. Major virulence factor that may function as a water- and solute-permeable channel dedicated to creating osmotic/water potential perturbation and a water- and nutrient-rich apoplast in which bacteria multiply within the infected plant tissues. Expression in Xenopus oocytes results in inward and outward currents, permeability to water and osmolarity-dependent oocyte swelling and bursting. Functionally, acts as a major cell-death inducer during fire blight, a necrotic disease affecting plants of the rosaceous family, and during hypersensitive response (HR) on non-host plants. Essential for pathogenicity on host plants. Contributes quantitatively and in a strain-dependent fashion to HR elicitation in non-host plants such as tobacco. Induces cell death in leaves of apple, a host plant, and tobacco, a non-host plant. Also triggers necrosis in the widely used model, non-host, N.benthamiana and in yeast. Required for the transient multiplication and survival of E.amylovora in non-host A.thaliana leaves. In A.thaliana, triggers electrolyte leakage, activation of defense pathways, reactive oxygen species (ROS) accumulation and cell death. The toxicity of DspE in A.thaliana is associated with an early repression of de novo protein synthesis. In Erwinia amylovora (Fire blight bacteria), this protein is Type III effector DspE.